We begin with the raw amino-acid sequence, 248 residues long: DNA repair protein RecO (248 aa).

Belongs to the RecO family.

Involved in DNA repair and RecF pathway recombination. In Bartonella tribocorum (strain CIP 105476 / IBS 506), this protein is DNA repair protein RecO.